We begin with the raw amino-acid sequence, 501 residues long: MNTQSDSAGSQGAAATSRTVSIRTLIALIIGSTVGAGIFSIPQNIGSVAGPGAMLIGWLIAGVGMLSVAFVFHVLARRKPHLDSGVYAYARVGLGDYVGFSSAWGYWLGSVIAQVGYATLFFSTLGHYVPLFSQDHPFVSALAVSALTWLVFGVVSRGISQAAFLTTVTTVAKILPLLCFIILVAFLGFSWEKFTVDLWARDGGVGSIFDQVRGIMVYTVWVFIGIEGASVYSRQARSRSDVSRATVIGFVAVLLLLVSISSLSFGVLTQQELAALPDNSMASVLEAVVGPWGAALISLGLCLSVLGAYVSWQMLCAEPLALMAMDGLIPSKIGAINSRGAAWMAQLISTIVIQIFIIIFFLNETTYVSMVQLATNLYLVPYLFSAFYLVMLATRGKGITHPHAGTRFDDSGPEISRRENRKHLIVGLVATVYSVWLFYAAEPQFVLFGAMAMLPGLIPYVWTRIYRGEQVFNRFEIGVVVVLVVAASAGVIGLVNGSLSL.

13 helical membrane-spanning segments follow: residues 25-41 (LIAL…IFSI), 52-76 (GAML…HVLA), 92-113 (VGLG…SVIA), 138-155 (FVSA…FGVV), 174-191 (ILPL…GFSW), 214-232 (GIMV…ASVY), 247-269 (VIGF…GVLT), 292-316 (WGAA…QMLC), 340-362 (GAAW…IFFL), 377-393 (LYLV…VMLA), 424-440 (LIVG…LFYA), 447-463 (LFGA…YVWT), and 477-495 (IGVV…IGLV).

Belongs to the amino acid-polyamine-organocation (APC) superfamily. Basic amino acid/polyamine antiporter (APA) (TC 2.A.3.2) family.

The protein resides in the cell membrane. Its function is as follows. Permease that is involved in the transport across the membrane of lysine. This Corynebacterium glutamicum (strain ATCC 13032 / DSM 20300 / JCM 1318 / BCRC 11384 / CCUG 27702 / LMG 3730 / NBRC 12168 / NCIMB 10025 / NRRL B-2784 / 534) protein is L-lysine transport protein (lysI).